Reading from the N-terminus, the 807-residue chain is PGC-1 and ERR-induced regulator in muscle protein 1 (807 aa).

3 disordered regions span residues 29-80 (QADL…EDVA), 121-391 (CPGQ…TPAS), and 517-548 (PSHE…AGSR). Low complexity-rich tracts occupy residues 40 to 52 (SSDI…SGSS) and 145 to 160 (PAPS…PESP). The span at 162 to 171 (HSDNPQSSPD) shows a compositional bias: polar residues. Basic residues predominate over residues 180–194 (PGRKKRRAVGAKGTK). Composition is skewed to polar residues over residues 195–211 (HSGS…SPQL), 311–346 (KPQS…STPA), and 363–391 (ALST…TPAS). Residue S198 is modified to Phosphoserine. T534 is modified (phosphothreonine). R548 carries the omega-N-methylarginine modification.

As to expression, highly expressed in skeletal muscles and heart with lower levels in brown adipose tissue (at protein level). Muscle-specific expression is increased by endurance exercise.

Its subcellular location is the cytoplasm. It localises to the nucleus. Regulates the expression of selective PPARGC1A/B and ESRRA/B/G target genes with roles in glucose and lipid metabolism, energy transfer, contractile function, muscle mitochondrial biogenesis and oxidative capacity. Required for the efficient induction of MT-CO2, MT-CO3, COX4I1, TFB1M, TFB2M, POLRMT and SIRT3 by PPARGC1A. Positively regulates the PPARGC1A/ESRRG-induced expression of CKMT2, TNNI3 and SLC2A4 and negatively regulates the PPARGC1A/ESRRG-induced expression of PDK4. This Mus musculus (Mouse) protein is PGC-1 and ERR-induced regulator in muscle protein 1 (Perm1).